A 1976-amino-acid polypeptide reads, in one-letter code: Myosin-10 (1976 aa).

An Omega-N-methylarginine modification is found at Arg-18. In terms of domain architecture, Myosin N-terminal SH3-like spans 31-81; that stretch reads TAKKLVWIPSERHGFEAASIKEERGDEVLVELAENGKKAMVNKDDIQKMNP. One can recognise a Myosin motor domain in the interval 85–783; it reads SKVEDMAELT…VLAHLEEERD (699 aa). ATP is bound at residue 178–185; the sequence is GESGAGKT. Lys-442 is modified (N6-acetyllysine). The actin-binding stretch occupies residues 661 to 683; the sequence is LTKLMATLRNTNPNFVRCIIPNH. The IQ domain occupies 786–815; it reads ITDIIIFFQAVCRGYLARKAFAKKQQQLSA. The stretch at 845–1976 forms a coiled coil; sequence LQVTRQEEEL…INETQPPQSE (1132 aa). Positions 1126 to 1149 are disordered; that stretch reads DFESEKASRNKAEKQKRDLSEELE. Over residues 1129 to 1149 the composition is skewed to basic and acidic residues; the sequence is SEKASRNKAEKQKRDLSEELE. At Ser-1145 the chain carries Phosphoserine. An N6-acetyllysine mark is found at Lys-1241, Lys-1301, and Lys-1645. Disordered regions lie at residues 1697–1718 and 1874–1976; these read ASSERARRHAEQERDELADEIA and KANA…PQSE. A compositionally biased stretch (basic and acidic residues) spans 1698-1708; the sequence is SSERARRHAEQ. Arg-1930 carries the post-translational modification Omega-N-methylarginine. Phosphoserine is present on residues Ser-1935, Ser-1937, Ser-1938, and Ser-1939. An Omega-N-methylarginine modification is found at Arg-1940. A phosphoserine mark is found at Ser-1952 and Ser-1956. Thr-1960 bears the Phosphothreonine mark. Positions 1967–1976 are enriched in polar residues; that stretch reads INETQPPQSE. Ser-1975 is subject to Phosphoserine.

The protein belongs to the TRAFAC class myosin-kinesin ATPase superfamily. Myosin family. As to quaternary structure, myosin is a hexameric protein that consists of 2 heavy chain subunits (MHC), 2 alkali light chain subunits (MLC) and 2 regulatory light chain subunits (MLC-2). Interacts with PLEKHG6. Interacts with ECPAS. Interacts with KIF26B. Interacts with LARP6. Interacts with MCC. Interacts with CFAP95. Post-translationally, phosphorylated by ABL2.

The protein resides in the cell projection. It localises to the lamellipodium. In terms of biological role, cellular myosin that appears to play a role in cytokinesis, cell shape, and specialized functions such as secretion and capping. Involved with LARP6 in the stabilization of type I collagen mRNAs for CO1A1 and CO1A2. During cell spreading, plays an important role in cytoskeleton reorganization, focal contacts formation (in the central part but not the margins of spreading cells), and lamellipodial extension; this function is mechanically antagonized by MYH9. This is Myosin-10 (MYH10) from Bos taurus (Bovine).